The sequence spans 198 residues: Holliday junction branch migration complex subunit RuvA (198 aa).

A domain I region spans residues 1–63 (MYSYIIGVIT…EDASILYGFS (63 aa)). Residues 64–142 (SQKERELFNL…KDFVPSEKPV (79 aa)) are domain II. The interval 143-153 (NKEVKRSNDSE) is flexible linker. The tract at residues 153–198 (EFAREALLQLGYFKNDVDAFIENTDISGLSIEDIMKKAMKSLDSSR) is domain III.

This sequence belongs to the RuvA family. As to quaternary structure, homotetramer. Forms an RuvA(8)-RuvB(12)-Holliday junction (HJ) complex. HJ DNA is sandwiched between 2 RuvA tetramers; dsDNA enters through RuvA and exits via RuvB. An RuvB hexamer assembles on each DNA strand where it exits the tetramer. Each RuvB hexamer is contacted by two RuvA subunits (via domain III) on 2 adjacent RuvB subunits; this complex drives branch migration. In the full resolvosome a probable DNA-RuvA(4)-RuvB(12)-RuvC(2) complex forms which resolves the HJ.

It is found in the cytoplasm. In terms of biological role, the RuvA-RuvB-RuvC complex processes Holliday junction (HJ) DNA during genetic recombination and DNA repair, while the RuvA-RuvB complex plays an important role in the rescue of blocked DNA replication forks via replication fork reversal (RFR). RuvA specifically binds to HJ cruciform DNA, conferring on it an open structure. The RuvB hexamer acts as an ATP-dependent pump, pulling dsDNA into and through the RuvAB complex. HJ branch migration allows RuvC to scan DNA until it finds its consensus sequence, where it cleaves and resolves the cruciform DNA. This Finegoldia magna (strain ATCC 29328 / DSM 20472 / WAL 2508) (Peptostreptococcus magnus) protein is Holliday junction branch migration complex subunit RuvA.